The primary structure comprises 212 residues: Regulatory protein RecX (212 aa).

The protein belongs to the RecX family.

The protein localises to the cytoplasm. Functionally, modulates RecA activity. The polypeptide is Regulatory protein RecX (Clostridioides difficile (strain 630) (Peptoclostridium difficile)).